The sequence spans 174 residues: Caltractin ICL1e (174 aa).

The interval 1-33 is disordered; sequence MSKKQQAPVAQKPVGKQQQVNRKPQDRPGLTED. EF-hand domains follow at residues 33–68, 88–103, 105–140, and 141–174; these read DEIEEIKEAFNLFDTEGTGRVDPRELKAAMQSLGFD, IDFDQFLDAITSKLGN, ESRDGINKIFDLFDDDGSNSINLNNLKRVSKELGET, and MTAEELAEMLERAASNGRDISREDFYNIMVKRTF.

It belongs to the centrin family. As to quaternary structure, monomer.

The protein resides in the cytoplasm. It localises to the cytoskeleton. Functionally, plays a fundamental role in microtubule organizing center structure and function. Component of the infraciliary lattice (ICL) and the ciliary basal bodies. The polypeptide is Caltractin ICL1e (Icl1e) (Paramecium tetraurelia).